The following is a 321-amino-acid chain: Probable GDP-L-fucose synthase (321 aa).

An NADP(+)-binding site is contributed by 8–14; sequence GGTGLVG. Tyrosine 136 acts as the Proton donor/acceptor in catalysis. NADP(+) is bound by residues lysine 140, 163–166, and histidine 179; that span reads PCNI. Residues arginine 187, arginine 215, and aspartate 277 each coordinate substrate.

It belongs to the NAD(P)-dependent epimerase/dehydratase family. Fucose synthase subfamily. As to quaternary structure, homodimer.

It carries out the reaction GDP-beta-L-fucose + NADP(+) = GDP-4-dehydro-alpha-D-rhamnose + NADPH + H(+). The protein operates within nucleotide-sugar biosynthesis; GDP-L-fucose biosynthesis via de novo pathway; GDP-L-fucose from GDP-alpha-D-mannose: step 2/2. Its function is as follows. Catalyzes the two-step NADP-dependent conversion of GDP-4-dehydro-6-deoxy-D-mannose to GDP-fucose, involving an epimerase and a reductase reaction. This is Probable GDP-L-fucose synthase (Gmer) from Drosophila melanogaster (Fruit fly).